A 515-amino-acid chain; its full sequence is GMP synthase [glutamine-hydrolyzing] (515 aa).

The Glutamine amidotransferase type-1 domain maps to 10–200 (TIIVLDFGSQ…VFGVCGCSEG (191 aa)). Cysteine 87 serves as the catalytic Nucleophile. Active-site residues include histidine 174 and glutamate 176. The GMPS ATP-PPase domain maps to 201–390 (WNMENFIEVE…LGIPDEIVWR (190 aa)). 228-234 (SGGVDSS) serves as a coordination point for ATP.

As to quaternary structure, homodimer.

It carries out the reaction XMP + L-glutamine + ATP + H2O = GMP + L-glutamate + AMP + diphosphate + 2 H(+). Its pathway is purine metabolism; GMP biosynthesis; GMP from XMP (L-Gln route): step 1/1. Catalyzes the synthesis of GMP from XMP. This chain is GMP synthase [glutamine-hydrolyzing], found in Bacillus cereus (strain ATCC 14579 / DSM 31 / CCUG 7414 / JCM 2152 / NBRC 15305 / NCIMB 9373 / NCTC 2599 / NRRL B-3711).